We begin with the raw amino-acid sequence, 513 residues long: ATP synthase subunit alpha (513 aa).

Residue 169 to 176 participates in ATP binding; that stretch reads GDRQTGKT.

The protein belongs to the ATPase alpha/beta chains family. F-type ATPases have 2 components, CF(1) - the catalytic core - and CF(0) - the membrane proton channel. CF(1) has five subunits: alpha(3), beta(3), gamma(1), delta(1), epsilon(1). CF(0) has three main subunits: a(1), b(2) and c(9-12). The alpha and beta chains form an alternating ring which encloses part of the gamma chain. CF(1) is attached to CF(0) by a central stalk formed by the gamma and epsilon chains, while a peripheral stalk is formed by the delta and b chains.

The protein localises to the cell inner membrane. It catalyses the reaction ATP + H2O + 4 H(+)(in) = ADP + phosphate + 5 H(+)(out). Produces ATP from ADP in the presence of a proton gradient across the membrane. The alpha chain is a regulatory subunit. This Shewanella oneidensis (strain ATCC 700550 / JCM 31522 / CIP 106686 / LMG 19005 / NCIMB 14063 / MR-1) protein is ATP synthase subunit alpha.